The chain runs to 396 residues: Phosphoglycerate kinase (396 aa).

Substrate contacts are provided by residues 21–23, Arg36, 59–62, Arg118, and Arg151; these read DLN and HFDR. ATP-binding positions include Lys201, Glu323, and 353 to 356; that span reads GGDT.

The protein belongs to the phosphoglycerate kinase family. Monomer.

It localises to the cytoplasm. The enzyme catalyses (2R)-3-phosphoglycerate + ATP = (2R)-3-phospho-glyceroyl phosphate + ADP. It participates in carbohydrate degradation; glycolysis; pyruvate from D-glyceraldehyde 3-phosphate: step 2/5. This is Phosphoglycerate kinase from Granulibacter bethesdensis (strain ATCC BAA-1260 / CGDNIH1).